The sequence spans 155 residues: Large ribosomal subunit protein uL15 (155 aa).

Residues 1-63 (MKLHELAPNP…QMPLTRRLPK (63 aa)) form a disordered region. 2 stretches are compositionally biased toward gly residues: residues 21 to 31 (RGIGSGLGKTS) and 42 to 52 (SGGGVRPGFEG).

It belongs to the universal ribosomal protein uL15 family. In terms of assembly, part of the 50S ribosomal subunit.

Functionally, binds to the 23S rRNA. This chain is Large ribosomal subunit protein uL15, found in Symbiobacterium thermophilum (strain DSM 24528 / JCM 14929 / IAM 14863 / T).